A 399-amino-acid chain; its full sequence is Peroxisome assembly protein 12 (399 aa).

Residues 1-24 form a disordered region; it reads MSFYSNLPSAGQSSRGSSTSGRNG. Topologically, residues 1-33 are peroxisomal matrix; it reads MSFYSNLPSAGQSSRGSSTSGRNGVGLEPLYPT. Residues 9-24 show a composition bias toward low complexity; it reads SAGQSSRGSSTSGRNG. The chain crosses the membrane as a helical span at residues 34–62; sequence IFEIMSSQEIDSLLPASIRYLLANHLVAN. Residues 63–67 lie on the Cytoplasmic side of the membrane; the sequence is FPNRY. A helical transmembrane segment spans residues 68–92; the sequence is TLRLNKYFFEWFQAIKGFVEWYHLK. At 93–136 the chain is on the peroxisomal matrix side; sequence TYNSTFIDRFYGLQLFSSRDRNLALTQCLNPKGQSEWPQGLQLN. The chain crosses the membrane as a helical span at residues 137–168; the sequence is QQQKSVIFLEKIILPYITAKLDEILEKISMNN. The Cytoplasmic portion of the chain corresponds to 169–171; the sequence is IFS. Residues 172 to 208 traverse the membrane as a helical segment; it reads SDETENKWPKRAFLRIYPFIKKLLALSNLLVKLLFLT. At 209–277 the chain is on the peroxisomal matrix side; the sequence is KRTGSVSLLQ…PRFLTFMGSQ (69 aa). A helical membrane pass occupies residues 278-305; sequence FFPTFIFVLRVYQWWTTQDMTTKLQKRV. At 306–399 the chain is on the cytoplasmic side; it reads NDLDEDIPRP…VVTGIRKLLI (94 aa). Positions 334, 337, 354, and 357 each coordinate Zn(2+). The RING-type; degenerate zinc-finger motif lies at 334-373; that stretch reads CPVCEKTVQNPCVLETGYVACYPCAISYLVNNEGHCPVTN.

The protein belongs to the pex2/pex10/pex12 family. As to quaternary structure, component of the PEX2-PEX10-PEX12 retrotranslocation channel, composed of PEX2, PEX10 and PEX12.

The protein localises to the peroxisome membrane. Its pathway is protein modification; protein ubiquitination. Component of a retrotranslocation channel required for peroxisome organization by mediating export of the PEX5 receptor from peroxisomes to the cytosol, thereby promoting PEX5 recycling. The retrotranslocation channel is composed of PEX2, PEX10 and PEX12; each subunit contributing transmembrane segments that coassemble into an open channel that specifically allows the passage of PEX5 through the peroxisomal membrane. PEX12 also regulates PEX5 recycling by activating the E3 ubiquitin-protein ligase activity of PEX10. When PEX5 recycling is compromised, PEX12 stimulates PEX10-mediated polyubiquitination of PEX5, leading to its subsequent degradation. The protein is Peroxisome assembly protein 12 of Saccharomyces cerevisiae (strain ATCC 204508 / S288c) (Baker's yeast).